Consider the following 85-residue polypeptide: Toxin To6 (85 aa).

Positions 1–20 (MSIFPIILALLLIGLDEGEA) are cleaved as a signal peptide. One can recognise an LCN-type CS-alpha/beta domain in the interval 21–83 (LDGYPLSKNN…EMYPGRLPCN (63 aa)). 4 cysteine pairs are disulfide-bonded: Cys32–Cys82, Cys36–Cys59, Cys42–Cys64, and Cys46–Cys66.

As to expression, expressed by the venom gland.

It is found in the secreted. Functionally, beta toxins bind voltage-independently at site-4 of sodium channels (Nav) and shift the voltage of activation toward more negative potentials thereby affecting sodium channel activation and promoting spontaneous and repetitive firing. The sequence is that of Toxin To6 from Tityus obscurus (Amazonian scorpion).